The chain runs to 628 residues: 1-deoxy-D-xylulose-5-phosphate synthase (628 aa).

Thiamine diphosphate contacts are provided by residues histidine 72 and 113 to 115 (GHS). Aspartate 144 provides a ligand contact to Mg(2+). Residues 145–146 (GA), asparagine 173, tyrosine 284, and glutamate 363 contribute to the thiamine diphosphate site. Asparagine 173 provides a ligand contact to Mg(2+).

The protein belongs to the transketolase family. DXPS subfamily. In terms of assembly, homodimer. Requires Mg(2+) as cofactor. Thiamine diphosphate serves as cofactor.

The enzyme catalyses D-glyceraldehyde 3-phosphate + pyruvate + H(+) = 1-deoxy-D-xylulose 5-phosphate + CO2. It functions in the pathway metabolic intermediate biosynthesis; 1-deoxy-D-xylulose 5-phosphate biosynthesis; 1-deoxy-D-xylulose 5-phosphate from D-glyceraldehyde 3-phosphate and pyruvate: step 1/1. In terms of biological role, catalyzes the acyloin condensation reaction between C atoms 2 and 3 of pyruvate and glyceraldehyde 3-phosphate to yield 1-deoxy-D-xylulose-5-phosphate (DXP). The polypeptide is 1-deoxy-D-xylulose-5-phosphate synthase (Brevibacillus brevis (strain 47 / JCM 6285 / NBRC 100599)).